Here is a 90-residue protein sequence, read N- to C-terminus: Acylphosphatase (90 aa).

The region spanning 3–90 (QYRIIVDGRV…DGFQKFNISY (88 aa)) is the Acylphosphatase-like domain. Active-site residues include Arg-18 and Asn-36.

Belongs to the acylphosphatase family.

It carries out the reaction an acyl phosphate + H2O = a carboxylate + phosphate + H(+). The sequence is that of Acylphosphatase (acyP) from Bacillus licheniformis (strain ATCC 14580 / DSM 13 / JCM 2505 / CCUG 7422 / NBRC 12200 / NCIMB 9375 / NCTC 10341 / NRRL NRS-1264 / Gibson 46).